The sequence spans 135 residues: uncharacterized protein (135 aa).

This is an uncharacterized protein from Saccharomyces cerevisiae (strain ATCC 204508 / S288c) (Baker's yeast).